A 78-amino-acid polypeptide reads, in one-letter code: ATP synthase subunit a (78 aa).

3 helical membrane-spanning segments follow: residues 13-33 (LFGNVYAKEMLMILLVGLGTS), 35-55 (FLGAFGAFLPLIVWQAFGMFI), and 57-77 (SLQAFIFAMLAMVYMAHKVEA).

It belongs to the ATPase A chain family. In terms of assembly, F-type ATPases have 2 components, CF(1) - the catalytic core - and CF(0) - the membrane proton channel. CF(1) has five subunits: alpha(3), beta(3), gamma(1), delta(1), epsilon(1). CF(0) has three main subunits: a(1), b(2) and c(9-12). The alpha and beta chains form an alternating ring which encloses part of the gamma chain. CF(1) is attached to CF(0) by a central stalk formed by the gamma and epsilon chains, while a peripheral stalk is formed by the delta and b chains.

The protein resides in the cell membrane. Functionally, key component of the proton channel; it plays a direct role in the translocation of protons across the membrane. This Alkalihalobacillus alcalophilus (Bacillus alcalophilus) protein is ATP synthase subunit a (atpB).